Here is a 44-residue protein sequence, read N- to C-terminus: Photosystem I reaction center subunit IX (44 aa).

Residues 7–27 traverse the membrane as a helical segment; that stretch reads YLSVAPVASTLWFVALAGLLI.

Belongs to the PsaJ family.

The protein resides in the plastid. It localises to the chloroplast thylakoid membrane. May help in the organization of the PsaE and PsaF subunits. In Cicer arietinum (Chickpea), this protein is Photosystem I reaction center subunit IX.